The sequence spans 261 residues: MHKPIKKLGQNFLKDKKIIKKIINFINPKYKDKIIEIGPGLGALTIPISKISKSITAIEIDKNLVYFLNKNKNIKNNLNIINIDIMKLNLKKFFSSFCDPVRIFGSLPYNISVSLMFNFIENYNKIIDMHFVIQKEVAQRILARPNNKHYGYISVIMQYYFYVEKLIDISNCAFKPIPKVQSSLIRMRPHKVCPFPFCDIDKMKVLLKSAFNQRRKMLKNSLKKYFSVEQIILYKINPKLRAENLSIENYCNLSNNMIIKK.

S-adenosyl-L-methionine is bound by residues asparagine 11, leucine 13, glycine 38, glutamate 59, aspartate 84, and serine 106.

It belongs to the class I-like SAM-binding methyltransferase superfamily. rRNA adenine N(6)-methyltransferase family. RsmA subfamily.

The protein resides in the cytoplasm. The enzyme catalyses adenosine(1518)/adenosine(1519) in 16S rRNA + 4 S-adenosyl-L-methionine = N(6)-dimethyladenosine(1518)/N(6)-dimethyladenosine(1519) in 16S rRNA + 4 S-adenosyl-L-homocysteine + 4 H(+). Functionally, specifically dimethylates two adjacent adenosines (A1518 and A1519) in the loop of a conserved hairpin near the 3'-end of 16S rRNA in the 30S particle. May play a critical role in biogenesis of 30S subunits. This chain is Ribosomal RNA small subunit methyltransferase A, found in Wigglesworthia glossinidia brevipalpis.